The chain runs to 158 residues: 6,7-dimethyl-8-ribityllumazine synthase (158 aa).

5-amino-6-(D-ribitylamino)uracil contacts are provided by residues F23, 61–63 (SFE), and 85–87 (AVI). Position 90–91 (90–91 (DT)) interacts with (2S)-2-hydroxy-3-oxobutyl phosphate. H93 (proton donor) is an active-site residue. F118 lines the 5-amino-6-(D-ribitylamino)uracil pocket. A (2S)-2-hydroxy-3-oxobutyl phosphate-binding site is contributed by R132.

This sequence belongs to the DMRL synthase family.

It carries out the reaction (2S)-2-hydroxy-3-oxobutyl phosphate + 5-amino-6-(D-ribitylamino)uracil = 6,7-dimethyl-8-(1-D-ribityl)lumazine + phosphate + 2 H2O + H(+). It participates in cofactor biosynthesis; riboflavin biosynthesis; riboflavin from 2-hydroxy-3-oxobutyl phosphate and 5-amino-6-(D-ribitylamino)uracil: step 1/2. Catalyzes the formation of 6,7-dimethyl-8-ribityllumazine by condensation of 5-amino-6-(D-ribitylamino)uracil with 3,4-dihydroxy-2-butanone 4-phosphate. This is the penultimate step in the biosynthesis of riboflavin. The sequence is that of 6,7-dimethyl-8-ribityllumazine synthase from Prochlorococcus marinus (strain NATL2A).